Here is a 430-residue protein sequence, read N- to C-terminus: Adenylosuccinate synthetase (430 aa).

Residues G12 to K18 and G40 to T42 each bind GTP. The active-site Proton acceptor is D13. Positions 13 and 40 each coordinate Mg(2+). IMP contacts are provided by residues D13–K16, N38–H41, T130, R144, Q224, T239, and R303. H41 acts as the Proton donor in catalysis. T299 to R305 contacts substrate. GTP is bound by residues R305, K331–D333, and S413–S415.

Belongs to the adenylosuccinate synthetase family. Homodimer. Mg(2+) is required as a cofactor.

The protein localises to the cytoplasm. It catalyses the reaction IMP + L-aspartate + GTP = N(6)-(1,2-dicarboxyethyl)-AMP + GDP + phosphate + 2 H(+). It participates in purine metabolism; AMP biosynthesis via de novo pathway; AMP from IMP: step 1/2. Plays an important role in the de novo pathway of purine nucleotide biosynthesis. Catalyzes the first committed step in the biosynthesis of AMP from IMP. The polypeptide is Adenylosuccinate synthetase (Cereibacter sphaeroides (strain ATCC 17029 / ATH 2.4.9) (Rhodobacter sphaeroides)).